Here is a 197-residue protein sequence, read N- to C-terminus: Phosphoheptose isomerase (197 aa).

In terms of domain architecture, SIS spans 40–197; that stretch reads CIASIAQGGK…LVEHSIFGKQ (158 aa). 55 to 57 contacts substrate; that stretch reads NGG. Zn(2+) is bound by residues His-64 and Glu-68. Substrate-binding positions include Glu-68, 97–98, 123–125, Ser-128, and Gln-175; these read ND and STS. 2 residues coordinate Zn(2+): Gln-175 and His-183.

The protein belongs to the SIS family. GmhA subfamily. In terms of assembly, homotetramer. It depends on Zn(2+) as a cofactor.

It localises to the cytoplasm. The catalysed reaction is 2 D-sedoheptulose 7-phosphate = D-glycero-alpha-D-manno-heptose 7-phosphate + D-glycero-beta-D-manno-heptose 7-phosphate. The protein operates within carbohydrate biosynthesis; D-glycero-D-manno-heptose 7-phosphate biosynthesis; D-glycero-alpha-D-manno-heptose 7-phosphate and D-glycero-beta-D-manno-heptose 7-phosphate from sedoheptulose 7-phosphate: step 1/1. It participates in capsule biogenesis; capsule polysaccharide biosynthesis. Its function is as follows. Catalyzes the isomerization of sedoheptulose 7-phosphate in D-glycero-D-manno-heptose 7-phosphate. This Burkholderia mallei (strain ATCC 23344) protein is Phosphoheptose isomerase.